The sequence spans 200 residues: Small ribosomal subunit protein eS1 (200 aa).

The protein belongs to the eukaryotic ribosomal protein eS1 family. In terms of assembly, part of the 30S ribosomal subunit.

The polypeptide is Small ribosomal subunit protein eS1 (Thermococcus kodakarensis (strain ATCC BAA-918 / JCM 12380 / KOD1) (Pyrococcus kodakaraensis (strain KOD1))).